The chain runs to 428 residues: Glutamate-1-semialdehyde 2,1-aminomutase 1 (428 aa).

Position 267 is an N6-(pyridoxal phosphate)lysine (Lys-267).

The protein belongs to the class-III pyridoxal-phosphate-dependent aminotransferase family. HemL subfamily. In terms of assembly, homodimer. Pyridoxal 5'-phosphate serves as cofactor.

It localises to the cytoplasm. The enzyme catalyses (S)-4-amino-5-oxopentanoate = 5-aminolevulinate. The protein operates within porphyrin-containing compound metabolism; protoporphyrin-IX biosynthesis; 5-aminolevulinate from L-glutamyl-tRNA(Glu): step 2/2. In Staphylococcus aureus (strain MW2), this protein is Glutamate-1-semialdehyde 2,1-aminomutase 1.